A 607-amino-acid polypeptide reads, in one-letter code: Methylmalonate-semialdehyde dehydrogenase [acylating], mitochondrial (607 aa).

Residues 1-69 (MVRVKQKNLE…KLRSSSSTTT (69 aa)) form a disordered region. Residues 1 to 98 (MVRVKQKNLE…QFLALRSSWL (98 aa)) constitute a mitochondrion transit peptide. Over residues 9-30 (LESYRSNGTYPPTWRNPTTSFA) the composition is skewed to polar residues. Residues 42-51 (LKSKTKRRRL) are compositionally biased toward basic residues. 5 residues coordinate NAD(+): Phe259, Lys283, Glu286, Lys287, and Ser336. The Nucleophile role is filled by Cys391. Residue Glu491 coordinates NAD(+).

It belongs to the aldehyde dehydrogenase family.

It localises to the mitochondrion. It carries out the reaction 2-methyl-3-oxopropanoate + NAD(+) + CoA + H2O = propanoyl-CoA + hydrogencarbonate + NADH + H(+). This chain is Methylmalonate-semialdehyde dehydrogenase [acylating], mitochondrial (ALDH6B2), found in Arabidopsis thaliana (Mouse-ear cress).